Reading from the N-terminus, the 103-residue chain is MEIKEISTAALKEKIEADEELYLIDVREDEEVAEGMIPQAVHIRMGDIPEKMETLDKDKEYVFICRSGMRSMNVCKYLDEQGFKTVNVEGGMMAWEGETKPKN.

In terms of domain architecture, Rhodanese spans 17-100; sequence ADEELYLIDV…GMMAWEGETK (84 aa). C65 serves as the catalytic Cysteine persulfide intermediate.

This chain is Putative sulfurtransferase YtwF (ytwF), found in Bacillus subtilis (strain 168).